The sequence spans 159 residues: 2-C-methyl-D-erythritol 2,4-cyclodiphosphate synthase (159 aa).

A divalent metal cation-binding residues include D10 and H12. 4-CDP-2-C-methyl-D-erythritol 2-phosphate contacts are provided by residues 10–12 (DVH) and 37–38 (HS). H45 provides a ligand contact to a divalent metal cation. Residues 59 to 61 (DIG), 64 to 68 (FPDTD), 103 to 109 (AQAPKML), 135 to 138 (TTTE), F142, and R145 each bind 4-CDP-2-C-methyl-D-erythritol 2-phosphate.

This sequence belongs to the IspF family. In terms of assembly, homotrimer. A divalent metal cation serves as cofactor.

The enzyme catalyses 4-CDP-2-C-methyl-D-erythritol 2-phosphate = 2-C-methyl-D-erythritol 2,4-cyclic diphosphate + CMP. It participates in isoprenoid biosynthesis; isopentenyl diphosphate biosynthesis via DXP pathway; isopentenyl diphosphate from 1-deoxy-D-xylulose 5-phosphate: step 4/6. In terms of biological role, involved in the biosynthesis of isopentenyl diphosphate (IPP) and dimethylallyl diphosphate (DMAPP), two major building blocks of isoprenoid compounds. Catalyzes the conversion of 4-diphosphocytidyl-2-C-methyl-D-erythritol 2-phosphate (CDP-ME2P) to 2-C-methyl-D-erythritol 2,4-cyclodiphosphate (ME-CPP) with a corresponding release of cytidine 5-monophosphate (CMP). This Francisella philomiragia subsp. philomiragia (strain ATCC 25017 / CCUG 19701 / FSC 153 / O#319-036) protein is 2-C-methyl-D-erythritol 2,4-cyclodiphosphate synthase.